Consider the following 111-residue polypeptide: Nucleoid-associated protein NGK_1136 (111 aa).

Belongs to the YbaB/EbfC family. Homodimer.

It localises to the cytoplasm. Its subcellular location is the nucleoid. Binds to DNA and alters its conformation. May be involved in regulation of gene expression, nucleoid organization and DNA protection. This Neisseria gonorrhoeae (strain NCCP11945) protein is Nucleoid-associated protein NGK_1136.